A 342-amino-acid polypeptide reads, in one-letter code: L-threonine 3-dehydrogenase (342 aa).

Cys-38 lines the Zn(2+) pocket. Active-site charge relay system residues include Thr-40 and His-43. Zn(2+) contacts are provided by His-63, Glu-64, Cys-93, Cys-96, Cys-99, and Cys-107. NAD(+) contacts are provided by residues Ile-175, Asp-195, Arg-200, 262–264, and 286–287; these read LGI and IY.

The protein belongs to the zinc-containing alcohol dehydrogenase family. In terms of assembly, homotetramer. It depends on Zn(2+) as a cofactor.

Its subcellular location is the cytoplasm. The catalysed reaction is L-threonine + NAD(+) = (2S)-2-amino-3-oxobutanoate + NADH + H(+). It participates in amino-acid degradation; L-threonine degradation via oxydo-reductase pathway; glycine from L-threonine: step 1/2. In terms of biological role, catalyzes the NAD(+)-dependent oxidation of L-threonine to 2-amino-3-ketobutyrate. The sequence is that of L-threonine 3-dehydrogenase from Burkholderia lata (strain ATCC 17760 / DSM 23089 / LMG 22485 / NCIMB 9086 / R18194 / 383).